A 923-amino-acid chain; its full sequence is Protein dct-6 (923 aa).

Residues 312–347 adopt a coiled-coil conformation; the sequence is DMNDQIEQMISLLVDELSELEKLEQLCKEVERTGNQ.

Its function is as follows. May have a role in tumor suppression. The sequence is that of Protein dct-6 (dct-6) from Caenorhabditis elegans.